The following is a 132-amino-acid chain: Ribonuclease P protein component 4 (132 aa).

Cys67, Cys70, Cys96, and Cys99 together coordinate Zn(2+).

It belongs to the eukaryotic/archaeal RNase P protein component 4 family. In terms of assembly, consists of a catalytic RNA component and at least 4-5 protein subunits. It depends on Zn(2+) as a cofactor.

Its subcellular location is the cytoplasm. It carries out the reaction Endonucleolytic cleavage of RNA, removing 5'-extranucleotides from tRNA precursor.. In terms of biological role, part of ribonuclease P, a protein complex that generates mature tRNA molecules by cleaving their 5'-ends. This chain is Ribonuclease P protein component 4, found in Thermococcus kodakarensis (strain ATCC BAA-918 / JCM 12380 / KOD1) (Pyrococcus kodakaraensis (strain KOD1)).